A 400-amino-acid polypeptide reads, in one-letter code: Selection and upkeep of intraepithelial T-cells protein 2 (400 aa).

Residues 1 to 21 (MGATGVLLCVVLHFLQMVTQS) form the signal peptide. Over 22-240 (SEKFTVTGLQ…LSGELFSWKR (219 aa)) the chain is Extracellular. The Ig-like V-type domain maps to 23–133 (EKFTVTGLQR…VGEFYEEHIT (111 aa)). 2 disulfide bridges follow: cysteine 46–cysteine 120 and cysteine 160–cysteine 214. The 87-residue stretch at 139 to 225 (ATSSVMYILM…LQNLLTHQEE (87 aa)) folds into the Ig-like C1-type domain. The N-linked (GlcNAc...) asparagine glycan is linked to asparagine 197. The helical transmembrane segment at 241–261 (VWIMILTTIGFMMIAFCMTYC) threads the bilayer. The Cytoplasmic segment spans residues 262-280 (VQQHLLYGTFSKGKCHWLK). The chain crosses the membrane as a helical span at residues 281 to 301 (STMIFMFSVIAVTGVMLILHL). Topologically, residues 302–321 (KQRVPVSDQHFELDTLWLED) are extracellular. Residues 322 to 342 (ISVILCVLIVFIIKLISFIYF) form a helical membrane-spanning segment. The Cytoplasmic segment spans residues 343–400 (RLEGDHQGWSLPPYLSATPTAAICRLAVPEYSRGHLQLDSEDDLAGMGPSPFFITPCF).

It belongs to the SKINT family. In terms of tissue distribution, expressed in skin, thymus and mammary gland.

The protein resides in the membrane. In terms of biological role, may act by engaging a cell surface molecule on immature T-cells in the embryonic thymus. This chain is Selection and upkeep of intraepithelial T-cells protein 2 (Skint2), found in Mus musculus (Mouse).